Consider the following 637-residue polypeptide: Biosynthetic arginine decarboxylase (637 aa).

Residue K101 is modified to N6-(pyridoxal phosphate)lysine. 286–296 contacts substrate; it reads FDVGGGLAVDY.

Belongs to the Orn/Lys/Arg decarboxylase class-II family. SpeA subfamily. It depends on Mg(2+) as a cofactor. Pyridoxal 5'-phosphate is required as a cofactor.

It carries out the reaction L-arginine + H(+) = agmatine + CO2. It functions in the pathway amine and polyamine biosynthesis; agmatine biosynthesis; agmatine from L-arginine: step 1/1. In terms of biological role, catalyzes the biosynthesis of agmatine from arginine. The chain is Biosynthetic arginine decarboxylase from Shewanella baltica (strain OS195).